The sequence spans 423 residues: Diaminobutyrate--2-oxoglutarate transaminase (423 aa).

Lysine 271 carries the N6-(pyridoxal phosphate)lysine modification.

The protein belongs to the class-III pyridoxal-phosphate-dependent aminotransferase family. Pyridoxal 5'-phosphate is required as a cofactor.

The enzyme catalyses L-2,4-diaminobutanoate + 2-oxoglutarate = L-aspartate 4-semialdehyde + L-glutamate. Its pathway is amine and polyamine biosynthesis; ectoine biosynthesis; L-ectoine from L-aspartate 4-semialdehyde: step 1/3. Functionally, catalyzes reversively the conversion of L-aspartate beta-semialdehyde (ASA) to L-2,4-diaminobutyrate (DABA) by transamination with L-glutamate. The polypeptide is Diaminobutyrate--2-oxoglutarate transaminase (ectB) (Streptomyces avermitilis (strain ATCC 31267 / DSM 46492 / JCM 5070 / NBRC 14893 / NCIMB 12804 / NRRL 8165 / MA-4680)).